The primary structure comprises 122 residues: UPF0102 protein XCV0816 (122 aa).

Belongs to the UPF0102 family.

This chain is UPF0102 protein XCV0816, found in Xanthomonas euvesicatoria pv. vesicatoria (strain 85-10) (Xanthomonas campestris pv. vesicatoria).